Reading from the N-terminus, the 1615-residue chain is MAYTQTATTSALLDTVRGNNTLVNDLAKRRLYDTAVDEFNARDRRPKVNFSKVISEEQTLIATRAYPEFQITFYNTQNAVHSLAGGLRSLELEYLMMQIPYGSLTYDIGGNFASHLFKGRAYVHCCMPNLDVRDIMRHEGQKDSIELYLSRLERGNKVVPNFQKEAFDRYAETPDEVVCHSTFQTCTHQQVENTGRVYAIALHSIYDIPADEFGAALLRKNVHVCYAAFHFSENLLLEDSHVNLDEINACFSRDGDKLTFSFASESTLNYCHSYSNILKYVCKTYFPASNREVYMKEFLVTRVNTWFCKFSRIDTFLLYKGVAHKGVNSEQFYSAMEDAWHYKKTLAMCNSERILLEDSSSVNYWFPKMRDMVIVPLFDISLDTSKRTRKEVLVSKDFVFTVLNHIRTYQAKALTYSNVLSFVESIRSRVIINGVTARSEWDVDKSLLQSLSMTFFLHTKLAVLKDELLISKFSLGPKSVSQHVWDEISLAFGNAFPSIKERLLNRKLIKVSGDALEIRVPDLYVTFHDRLVTEYKTSVDMPVLDIRKRMEETEVMYNALSELSVLKESDKFDVDVFSRMCQTLEVDPMTAAKVIVAVMSNESGLTLTFEQPTEANVALALKDSEKASEGALVVTSRDVEEPSMKGSMARGELQLAGLSGDQPESSYTRNEEIESLEQFHMATASSLIRKQMSSIVYTGPIKVQQMKNFIDSLVASLSAAVSNLVKILKDTAAIDLETRQKFGVLDVATKRWLIKPLAKNHAWGVIETHARKYHVALLEYDEHGVVTCDSWRRVAVSSESMVYSDMAKLRTLRRLLRDGEPHVSSAKVVLVDGVPGCGKTKEILSKVNFEEDLILVPGKQAAEMIKRRANASGIIQATRDNVRTVDSFIMNYGKGTRCQFKRLFIDEGLMLHTGCVNFLVSMSLCEIAYVYGDTQQIPYINRVSGFPYPAHFAKIEVDEVETRRTTLRCPADITHYLNRRYEGYVMCTSSVKKSVSQEMVSGAAMINPVSKPLNGKVLTFTQSDKEALLSRGYTDVHTVHEVQGETYADVSLVRLTPTPVSIIAGDSPHVLVALSRHTQTLKYYTVVMDPLVSIIRDLEKLSSYLLDMYKVDAGTQXQLQVDSVFKGSNLFVAAPKTGDISDMQFYYDKCLPGNSTMLNNYDAVTMRLTDISLNVKDCILDFSKSVAAPKDPIKPLIPMVRTAAEMPRQTGLLENLVAMIKRNFNSPELSGIIDIENTASLVVDKFFDSYLLKEKRKPNKNVSLFCRESLNRWLEKQEQVTIGQLADFDFVDLPAVDQYRHMIKAQPKQKLDTSIQSEYPALQTIVYHSKKINAIFGPLFSELTRQMLESIDSSKFLFFTRKTPAQIEDFFGDLDSHVPMDILELDISKYDKSQNEFHCAVEYEIWRRLGLEDFLGEVWKQGHRKTTLKDYTAGIKTCLWYQRKSGDVTTFIGNTVIIAACLASMLPMEKIIKGAFCGDDSLLYFPKGCEFPDIQHTANLMWNFEAKLFRKQYGYFCGRYVIHHDRGCIVYYDPLKLISKLGAKHIKDWDHLEEFRRSLCDVANSLNNCAYYTQLDDAVSEVHKTAPPGSFVYKSLVKYLSDKVLFRSLFIDGSC.

Positions 72-281 (TFYNTQNAVH…HSYSNILKYV (210 aa)) constitute an Alphavirus-like MT domain. Residues 801 to 963 (MVYSDMAKLR…KIEVDEVETR (163 aa)) form the (+)RNA virus helicase ATP-binding domain. 833 to 840 (GVPGCGKT) contributes to the a ribonucleoside 5'-triphosphate binding site. The region spanning 964 to 1116 (RTTLRCPADI…DMYKVDAGTQ (153 aa)) is the (+)RNA virus helicase C-terminal domain. The region spanning 1380–1493 (MDILELDISK…YFPKGCEFPD (114 aa)) is the RdRp catalytic domain.

It belongs to the ssRNA positive-strand viruses RNA-directed RNA polymerase family. In terms of assembly, heterodimer of a large and a small subunit.

The enzyme catalyses RNA(n) + a ribonucleoside 5'-triphosphate = RNA(n+1) + diphosphate. It catalyses the reaction ATP + H2O = ADP + phosphate + H(+). Functionally, is an RNA-dependent RNA polymerase active in viral RNA replication. In terms of biological role, is a methyltransferase active in RNA capping and an RNA helicase. Methyltransferase displays a cytoplasmic capping enzyme activity. This function is necessary since all viral RNAs are synthesized in the cytoplasm, and host capping enzymes are restricted to the nucleus. Helicase region probably exhibits NTPase and RNA unwinding activities. It also acts as a suppressor of RNA-mediated gene silencing, also known as post-transcriptional gene silencing (PTGS), a mechanism of plant viral defense that limits the accumulation of viral RNAs. May mediate silencing suppression through either inhibition of HEN1-mediated siRNA or siRNA demethylation. This chain is Replicase large subunit, found in Solanum lycopersicum (Tomato).